The primary structure comprises 327 residues: Fe-S cluster assembly protein DRE2 (327 aa).

The segment covering Met-1–Phe-14 has biased composition (polar residues). Disordered regions lie at residues Met-1 to Pro-20 and Asn-153 to Ala-179. Residues Gly-17–Val-144 form an N-terminal SAM-like domain region. The interval Pro-145 to Leu-214 is linker. The segment covering Pro-164–Ala-179 has biased composition (low complexity). [2Fe-2S] cluster is bound by residues Cys-224, Cys-235, Cys-238, and Cys-240. A fe-S binding site A region spans residues Cys-224 to Cys-240. [4Fe-4S] cluster contacts are provided by Cys-290, Cys-293, Cys-301, and Cys-304. Short sequence motifs (cx2C motif) lie at residues Cys-290–Cys-293 and Cys-301–Cys-304. A fe-S binding site B region spans residues Cys-290–Cys-304.

This sequence belongs to the anamorsin family. As to quaternary structure, monomer. Interacts with TAH18. Interacts with MIA40. The cofactor is [2Fe-2S] cluster. Requires [4Fe-4S] cluster as cofactor.

Its subcellular location is the cytoplasm. The protein localises to the mitochondrion intermembrane space. Functionally, component of the cytosolic iron-sulfur (Fe-S) protein assembly (CIA) machinery required for the maturation of extramitochondrial Fe-S proteins. Part of an electron transfer chain functioning in an early step of cytosolic Fe-S biogenesis, facilitating the de novo assembly of a [4Fe-4S] cluster on the scaffold complex CFD1-NBP35. Electrons are transferred to DRE2 from NADPH via the FAD- and FMN-containing protein TAH18. TAH18-DRE2 are also required for the assembly of the diferric tyrosyl radical cofactor of ribonucleotide reductase (RNR), probably by providing electrons for reduction during radical cofactor maturation in the catalytic small subunit RNR2. In Pyricularia oryzae (strain 70-15 / ATCC MYA-4617 / FGSC 8958) (Rice blast fungus), this protein is Fe-S cluster assembly protein DRE2.